The sequence spans 105 residues: Small ribosomal subunit protein uS10 (105 aa).

Belongs to the universal ribosomal protein uS10 family. Part of the 30S ribosomal subunit.

Functionally, involved in the binding of tRNA to the ribosomes. This chain is Small ribosomal subunit protein uS10, found in Rickettsia typhi (strain ATCC VR-144 / Wilmington).